The sequence spans 1065 residues: MPHLPLASFRPPLWGLRPSWGLARPRALCTQPEPHGSPVSRRNREAKQKRLREKQAALEAGLAEKSKTPAVPTKAWSHKEVVLYEIPTRPGEKKDVSGPLPPAYSPQYVEAAWYQWWVREGFFKPEYQARLPQATGETFSMCIPPPNVTGSLHIGHALTVAIQDAFVRWHRMRGDRVLWIPGSDHAGIATQAVVEKQLWRERRVRRHELSREDFLRAVWQWKQEKGGEIYEQLCALGASLDWDRECFTMDAGSSAAVTEAFVRLYDLGLLYRNRQLVNWSCTLRSAISDIEVESRPLPGRTVLRLPGCPIPVSFGLLVSIAFPVDGDPGTEIVVGTTRPETLPGDVAVAVHPDDPRYTHLHGRQLRHPLTGQHLPLITDTTVQPHVGTGAVKVTPAHSPADAEMGTRHGLTPLSVIAEDGTMTSLCGDWLQGLHRFVAREKIMCTLRERGLFRGLQEHPMVLPICSRSGDVVEYLLKSQWFVRCQEMGDRAAKAVESGALELWPSFHQKSWQHWFAHIGDWCVSRQLWWGHQIPAYRVGGEKAEDDREECWVVGRSEAEARAAAAKQTGRPEAELTLERDPDVLDTWFSSALFPFSALGWPQETPDLARFYPLTLLETGSDLLTFWVGRMVMLGTQLTGQLPFSKVLLHSMVRDRQGRKMSKSLGNVLDPRDIISGQELQVLQAKLRDGNLDQGELAVAAAAQKKDFPYGIPECGTDALRFALCSHGILGGDLHLSVSEVLNYRHFCNKLWNALRFILRALGDDFVPQPAEKVTPSSPMDAWILSRLAFAANECERGFLSRELSLVTHTLYHFWLHNLCDVYLEAVKPVLSSAPCPPGPPQVLFSCADVGLRLLAPLMPFLAEELWQRLPPRQGGSMAPSICVAPYPSGHSLVSRGQESWRQPELEHCFSRVQEIVQALRALRATYQLTRARPHVLLQSSDPGEQGLVQPFLEPLGVLSHCGAVGFLPPGAAAPSGWALAPLGDTIKIYMELQGLVDPQSQLPRLAARRQKLQKQLDDLLNRTVSDGPAERQQRISSLQLELSKLDQAASHLQQLMEEAPDAREL.

Residues M1 to G15 constitute a mitochondrion transit peptide. Positions A27–R52 are disordered. The span at R42–R52 shows a compositional bias: basic and acidic residues. A 'HIGH' region motif is present at residues P146–H156. Positions K659–S663 match the 'KMSKS' region motif. K662 provides a ligand contact to ATP.

The protein belongs to the class-I aminoacyl-tRNA synthetase family.

Its subcellular location is the mitochondrion. It carries out the reaction tRNA(Val) + L-valine + ATP = L-valyl-tRNA(Val) + AMP + diphosphate. In terms of biological role, catalyzes the attachment of valine to tRNA(Val) in a two-step reaction: valine is first activated by ATP to form Val-AMP and then transferred to the acceptor end of tRNA(Val). This is Valine--tRNA ligase, mitochondrial (Vars2) from Rattus norvegicus (Rat).